An 829-amino-acid chain; its full sequence is Protein Jade-1 (829 aa).

The segment covering 1-10 (MKRSRVPSTS) has biased composition (polar residues). The segment at 1–40 (MKRSRVPSTSEDSDNGSNSTSWSQHSNSKHRKQSGKRPSE) is disordered. A compositionally biased stretch (low complexity) spans 15–26 (NGSNSTSWSQHS). Residues 196 to 246 (DVVCDVCQSPDGEDGNEMVFCDKCNICVHQACYGILKVPEGSWLCRTCALG) form a PHD-type 1 zinc finger. The segment at 248 to 282 (FPKCHLCPKKGGAMKPTRSGTKWVHVSCALWIPEV) adopts a C2HC pre-PHD-type zinc-finger fold. The PHD-type 2 zinc finger occupies 306-362 (LICCLCKEKTGACIQCSAKSCRVAFHVTCGLHCGLKMNTILTEADEVKFKSFCPKHS). Disordered regions lie at residues 368–408 (EEEG…PEET), 556–651 (PPVP…RRKS), and 697–829 (ATAP…VLAS). Positions 374–390 (DRPVKVPTREDRSRNRG) are enriched in basic and acidic residues. Composition is skewed to polar residues over residues 394–405 (SASSQTRLSQNP), 570–586 (GQNSTLSSSEKGSNSYR), and 607–619 (SGDSVRSETVMSA). Residues 622 to 648 (RRSEGRTRSGESHRKEEESERPLEDRR) show a composition bias toward basic and acidic residues. The segment covering 697 to 714 (ATAPNMYSGSPRKTNASH) has biased composition (polar residues). Residues 738-754 (KRSERTSAGRQTERQEA) show a composition bias toward basic and acidic residues. The span at 762–774 (SSLKTFSTSPSSP) shows a compositional bias: low complexity. A compositionally biased stretch (basic and acidic residues) spans 782–792 (TGSENRRHLEE).

It belongs to the JADE family. Component of the HBO1 complex composed.

The protein localises to the nucleus. It is found in the chromosome. The protein resides in the cytoplasm. Its subcellular location is the cytoskeleton. It localises to the cilium basal body. In terms of biological role, scaffold subunit of some HBO1 complexes, which have a histone H4 acetyltransferase activity. Plays a key role in HBO1 complex by directing KAT7/HBO1 specificity towards histone H4 acetylation (H4K5ac, H4K8ac and H4K12ac), regulating DNA replication initiation, regulating DNA replication initiation. In Danio rerio (Zebrafish), this protein is Protein Jade-1 (jade1).